Reading from the N-terminus, the 2764-residue chain is Teneurin-2 (2764 aa).

The Teneurin N-terminal domain maps to 1–375; the sequence is MDVKDRRHRS…KPSKYCSWKC (375 aa). Topologically, residues 1 to 379 are cytoplasmic; the sequence is MDVKDRRHRS…YCSWKCAALS (379 aa). Phosphoserine occurs at positions 90 and 124. A disordered region spans residues 111–271; that stretch reads TGSDADSDTE…HHHSSANSLN (161 aa). Positions 141–155 are enriched in polar residues; it reads SSGLSSRENSALTLT. At Thr155 the chain carries Phosphothreonine. Position 157 is a phosphoserine (Ser157). Residues 159–168 are compositionally biased toward basic and acidic residues; it reads NENKSDDDNG. Positions 174–188 are enriched in low complexity; that stretch reads TSSSSLLPSAQLPSS. Positions 202–211 are enriched in polar residues; the sequence is DSNTSHQIMD. A compositionally biased stretch (low complexity) spans 229-240; the sequence is SGPQQASSSGPP. The helical transmembrane segment at 380–400 threads the bilayer; it reads AIAAALLLAILLAYFIAMHLL. The Extracellular portion of the chain corresponds to 401 to 2764; it reads GLNWQLQPAD…FLRQNEMGKR (2364 aa). Residues Asn443 and Asn482 are each glycosylated (N-linked (GlcNAc...) asparagine). EGF-like domains lie at 575-603, 598-634, 636-668, 669-701, 702-735, 737-765, 768-796, and 798-831; these read DCPR…ADCA, LGAD…AECD, PMNQ…EHCE, EVDC…NCEL, ARVQ…PDCS, VCSV…AACD, VCHP…EHCT, and DGCP…PGCN. Cystine bridges form between Cys576–Cys586, Cys580–Cys591, Cys593–Cys602, Cys611–Cys622, Cys624–Cys633, Cys640–Cys651, Cys645–Cys656, Cys658–Cys667, Cys672–Cys683, Cys677–Cys688, Cys690–Cys699, Cys710–Cys723, Cys725–Cys734, Cys738–Cys748, Cys742–Cys753, Cys755–Cys764, Cys769–Cys779, Cys773–Cys784, Cys786–Cys795, Cys800–Cys810, Cys804–Cys819, and Cys821–Cys830. Residues Asn915, Asn938, and Asn1257 are each glycosylated (N-linked (GlcNAc...) asparagine). 5 NHL repeats span residues 1262–1306, 1332–1376, 1391–1442, 1464–1491, and 1520–1563; these read LELR…VKSL, ARCG…NGII, LSCD…IAGR, LESA…INRL, and CYSG…VSKN. A YD 1 repeat occupies 1573–1592; that stretch reads YEAASPGEQELYVFNADGIH. Residue Asn1606 is glycosylated (N-linked (GlcNAc...) asparagine). YD repeat units follow at residues 1609–1629, 1672–1691, and 1692–1714; these read YSAD…LKIR, YDGN…WTTF, and YDYD…TSLH. N-linked (GlcNAc...) asparagine glycans are attached at residues Asn1702, Asn1739, Asn1763, Asn1797, and Asn1882. YD repeat units lie at residues 1885–1904, 1926–1944, 1945–1965, 1972–1989, 1990–2011, 2012–2029, 2032–2052, 2055–2075, 2083–2103, 2109–2126, 2127–2153, 2155–2168, 2169–2192, 2195–2215, 2216–2236, 2238–2258, 2270–2290, and 2292–2312; these read YFFN…ERTD, YLDK…YIFE, YDSS…HSMS, YIRN…VIFD, YSDD…VFYK, YGKL…TAVT, YDET…FSCT, YRKV…EGMI, YHDN…TPLP, YDEI…GVIY, YDIN…IKEV, YEMF…MTVQ, YDSM…TKYT, YDGD…WRYS, YDLN…LMPL, YDLR…DDDG, YNSK…SVQY, and YDGV…LQYF. N-linked (GlcNAc...) asparagine glycosylation is present at Asn1983. Asn2187 is a glycosylation site (N-linked (GlcNAc...) asparagine). Asn2327 carries N-linked (GlcNAc...) asparagine glycosylation. A YD 23 repeat occupies 2338 to 2379; it reads YDLQGHLFAMESSSGEEYYVASDNTGTPLAVYSINGLMIKQL. Residue Asn2638 is glycosylated (N-linked (GlcNAc...) asparagine).

It belongs to the tenascin family. Teneurin subfamily. As to quaternary structure, homodimer; disulfide-linked. Heterodimer with either TENM1 or TENM3. May also form heterodimer with TENM4. In terms of processing, derives from the membrane form by proteolytic processing. Derives from the plasma membrane form by proteolytic cleavage and translocates to the nucleus. Homophilic binding of the C-terminal extracellular domain stimulates its proteolytic cleavage and release in the cytoplasmic. Is subjected to rapid degradation by the proteasome pathway. In terms of tissue distribution, expressed in the cortex, CA1, CA2, CA3, dentate gyrus and granular layer of the hippocampus. Expressed in the Purkinje cells and molecular layer of the cerebellum.

The protein localises to the cell membrane. Its subcellular location is the presynaptic cell membrane. It is found in the postsynaptic cell membrane. The protein resides in the endoplasmic reticulum. It localises to the golgi apparatus. The protein localises to the synapse. Its subcellular location is the cell projection. It is found in the dendritic spine. The protein resides in the filopodium. It localises to the growth cone. The protein localises to the nucleus. Its subcellular location is the PML body. Its function is as follows. Involved in neural development, regulating the establishment of proper connectivity within the nervous system. Acts as a ligand of the ADGRL1 and ADGRL3 receptors that are expressed at the surface of adjacent cells. Promotes the formation of filopodia and enlarged growth cone in neuronal cells. Mediates axon guidance and homophilic and heterophilic cell-cell adhesion. May function as a cellular signal transducer. Functionally, induces gene transcription inhibition. This chain is Teneurin-2 (Tenm2), found in Mus musculus (Mouse).